The chain runs to 215 residues: Glutathione S-transferase D4 (215 aa).

One can recognise a GST N-terminal domain in the interval 1–80 (MDFYYSPRSS…YLVEKYGKDD (80 aa)). Glutathione-binding positions include S9, 50–52 (HTI), and 64–66 (ESR). A GST C-terminal domain is found at 86-207 (DPQKRALINQ…KGLLQMKTMY (122 aa)).

Belongs to the GST superfamily. Delta family. Homodimer.

It catalyses the reaction RX + glutathione = an S-substituted glutathione + a halide anion + H(+). In terms of biological role, conjugation of reduced glutathione to a wide number of exogenous and endogenous hydrophobic electrophiles. May be involved in detoxification. This chain is Glutathione S-transferase D4, found in Drosophila melanogaster (Fruit fly).